The following is a 631-amino-acid chain: Extracellular metalloproteinase mep (631 aa).

An N-terminal signal peptide occupies residues 1-19; it reads MHGLRLVCSIGTLPLVILA. The propeptide occupies 20 to 241; it reads YPAASLHTTS…VHGVVDYVAD (222 aa). N-linked (GlcNAc...) asparagine glycans are attached at residues N282, N332, and N364. Position 425 (H425) interacts with Zn(2+). Residue E426 is part of the active site. Zn(2+) is bound at residue H429. N-linked (GlcNAc...) asparagine glycosylation is found at N470 and N505.

Belongs to the peptidase M36 family. It depends on Zn(2+) as a cofactor.

Its subcellular location is the secreted. Its function is as follows. Secreted metalloproteinase that allows assimilation of proteinaceous substrates. In Aspergillus niger (strain ATCC MYA-4892 / CBS 513.88 / FGSC A1513), this protein is Extracellular metalloproteinase mep (mep).